The following is a 42-amino-acid chain: Iota-conotoxin-like R11.15 (42 aa).

4 cysteine pairs are disulfide-bonded: Cys5–Cys19, Cys12–Cys22, Cys18–Cys27, and Cys21–Cys36.

This sequence belongs to the conotoxin I1 superfamily. As to expression, expressed by the venom duct.

The protein localises to the secreted. In terms of biological role, iota-conotoxins bind to voltage-gated sodium channels (Nav) and act as agonists by shifting the voltage-dependence of activation to more hyperpolarized levels. Produces general excitatory symptoms. The protein is Iota-conotoxin-like R11.15 of Conus radiatus (Rayed cone).